The sequence spans 110 residues: Ribonuclease (110 aa).

Residue Glu73 is the Proton acceptor of the active site. The Proton donor role is filled by His102.

It belongs to the ribonuclease N1/T1 family.

The protein localises to the secreted. Its function is as follows. Hydrolyzes phosphodiester bonds in RNA, poly- and oligoribonucleotides resulting in 3'-nucleoside monophosphates via 2',3'-cyclophosphate intermediates. The chain is Ribonuclease from Niallia circulans (Bacillus circulans).